A 420-amino-acid chain; its full sequence is Histidine--tRNA ligase (420 aa).

This sequence belongs to the class-II aminoacyl-tRNA synthetase family. As to quaternary structure, homodimer.

It is found in the cytoplasm. It catalyses the reaction tRNA(His) + L-histidine + ATP = L-histidyl-tRNA(His) + AMP + diphosphate + H(+). This chain is Histidine--tRNA ligase, found in Acholeplasma laidlawii (strain PG-8A).